The following is a 354-amino-acid chain: 3-isopropylmalate dehydrogenase (354 aa).

Arg-96, Arg-106, Arg-132, and Asp-223 together coordinate substrate. Positions 223, 247, and 251 each coordinate Mg(2+). 283-295 (GSAPDIAGQGKAD) lines the NAD(+) pocket.

This sequence belongs to the isocitrate and isopropylmalate dehydrogenases family. LeuB type 2 subfamily. As to quaternary structure, homodimer. It depends on Mg(2+) as a cofactor. Mn(2+) serves as cofactor.

It localises to the cytoplasm. It catalyses the reaction (2R,3S)-3-isopropylmalate + NAD(+) = 4-methyl-2-oxopentanoate + CO2 + NADH. It participates in amino-acid biosynthesis; L-leucine biosynthesis; L-leucine from 3-methyl-2-oxobutanoate: step 3/4. In terms of biological role, catalyzes the oxidation of 3-carboxy-2-hydroxy-4-methylpentanoate (3-isopropylmalate) to 3-carboxy-4-methyl-2-oxopentanoate. The product decarboxylates to 4-methyl-2 oxopentanoate. In Thermobifida fusca (strain YX), this protein is 3-isopropylmalate dehydrogenase.